Reading from the N-terminus, the 495-residue chain is Cobyric acid synthase (495 aa).

The region spanning 258 to 427 (GLRVAAVRLP…WHGLFDNDGF (170 aa)) is the GATase cobBQ-type domain. The active-site Nucleophile is Cys339. His419 is an active-site residue.

It belongs to the CobB/CobQ family. CobQ subfamily.

The protein operates within cofactor biosynthesis; adenosylcobalamin biosynthesis. In terms of biological role, catalyzes amidations at positions B, D, E, and G on adenosylcobyrinic A,C-diamide. NH(2) groups are provided by glutamine, and one molecule of ATP is hydrogenolyzed for each amidation. This chain is Cobyric acid synthase, found in Mycobacterium sp. (strain KMS).